The following is a 79-amino-acid chain: MTDLPVDKILDTLGLRCPEPVMLTRKTIRHMQQGEILFILADDPATTRDIPSFCEFMDHQLLKSKTDTPPYEYWIKKGI.

C17 (cysteine persulfide intermediate) is an active-site residue.

This sequence belongs to the sulfur carrier protein TusA family.

Its subcellular location is the cytoplasm. Sulfur carrier protein which probably makes part of a sulfur-relay system. The protein is Sulfur carrier protein TusA of Haemophilus ducreyi (strain 35000HP / ATCC 700724).